Reading from the N-terminus, the 233-residue chain is MPKRGKKYLEALKLVDRSKAYPIAEAIELVKKTNVAKFDATVEVAFRLGVDPKKADQQIRGAVVLPHGTGKVARVLVFAKGEKAKEAEAAGADYVGDTEYINKIQQGWFDFDVVVATPDMMGEVGKLGRILGPKGLMPDPKTGTVTFDVAKAVQEIKAGKVEYRVDKAGNIHVPIGKVSFDNEKLAENFAAVYEALIKAKPAAAKGTYVKNVTITSTMGPGIKVDPTTVAVAQ.

The protein belongs to the universal ribosomal protein uL1 family. In terms of assembly, part of the 50S ribosomal subunit.

Binds directly to 23S rRNA. The L1 stalk is quite mobile in the ribosome, and is involved in E site tRNA release. Functionally, protein L1 is also a translational repressor protein, it controls the translation of the L11 operon by binding to its mRNA. In Geobacillus stearothermophilus (Bacillus stearothermophilus), this protein is Large ribosomal subunit protein uL1.